Here is a 289-residue protein sequence, read N- to C-terminus: Thymidylate synthase (289 aa).

DUMP contacts are provided by residues Arg-21 and 150 to 151; that span reads RR. The active-site Nucleophile is Cys-170. Residues 191-194, Asn-202, and 232-234 each bind dUMP; these read RSGD and HIY. Asp-194 lines the (6R)-5,10-methylene-5,6,7,8-tetrahydrofolate pocket. Ala-288 provides a ligand contact to (6R)-5,10-methylene-5,6,7,8-tetrahydrofolate.

Belongs to the thymidylate synthase family. Bacterial-type ThyA subfamily. As to quaternary structure, homodimer.

Its subcellular location is the cytoplasm. The catalysed reaction is dUMP + (6R)-5,10-methylene-5,6,7,8-tetrahydrofolate = 7,8-dihydrofolate + dTMP. Its pathway is pyrimidine metabolism; dTTP biosynthesis. Catalyzes the reductive methylation of 2'-deoxyuridine-5'-monophosphate (dUMP) to 2'-deoxythymidine-5'-monophosphate (dTMP) while utilizing 5,10-methylenetetrahydrofolate (mTHF) as the methyl donor and reductant in the reaction, yielding dihydrofolate (DHF) as a by-product. This enzymatic reaction provides an intracellular de novo source of dTMP, an essential precursor for DNA biosynthesis. The protein is Thymidylate synthase of Mycoplasmopsis synoviae (strain 53) (Mycoplasma synoviae).